Here is a 345-residue protein sequence, read N- to C-terminus: Probable dual-specificity RNA methyltransferase RlmN (345 aa).

The active-site Proton acceptor is Glu-90. Residues 96 to 327 (QSYGNSVCVT…CIVRREFGHD (232 aa)) form the Radical SAM core domain. The cysteines at positions 103 and 332 are disulfide-linked. Positions 110, 114, and 117 each coordinate [4Fe-4S] cluster. Residues 160–161 (GE), Ser-192, 215–217 (SLH), and Asn-291 each bind S-adenosyl-L-methionine. Cys-332 acts as the S-methylcysteine intermediate in catalysis.

Belongs to the radical SAM superfamily. RlmN family. It depends on [4Fe-4S] cluster as a cofactor.

It is found in the cytoplasm. The enzyme catalyses adenosine(2503) in 23S rRNA + 2 reduced [2Fe-2S]-[ferredoxin] + 2 S-adenosyl-L-methionine = 2-methyladenosine(2503) in 23S rRNA + 5'-deoxyadenosine + L-methionine + 2 oxidized [2Fe-2S]-[ferredoxin] + S-adenosyl-L-homocysteine. It catalyses the reaction adenosine(37) in tRNA + 2 reduced [2Fe-2S]-[ferredoxin] + 2 S-adenosyl-L-methionine = 2-methyladenosine(37) in tRNA + 5'-deoxyadenosine + L-methionine + 2 oxidized [2Fe-2S]-[ferredoxin] + S-adenosyl-L-homocysteine. Its function is as follows. Specifically methylates position 2 of adenine 2503 in 23S rRNA and position 2 of adenine 37 in tRNAs. This chain is Probable dual-specificity RNA methyltransferase RlmN, found in Spiroplasma citri.